We begin with the raw amino-acid sequence, 44 residues long: Small ribosomal subunit protein eS31 (44 aa).

Residues C18, C21, C35, and C38 each coordinate Zn(2+). The segment at 18 to 38 (CPRCGDTFLAAHDDRQVCGRC) adopts a C4-type zinc-finger fold.

This sequence belongs to the eukaryotic ribosomal protein eS31 family. In terms of assembly, part of the 30S ribosomal subunit. Zn(2+) serves as cofactor.

The polypeptide is Small ribosomal subunit protein eS31 (Halobacterium salinarum (strain ATCC 29341 / DSM 671 / R1)).